A 579-amino-acid polypeptide reads, in one-letter code: Potassium-transporting ATPase potassium-binding subunit (579 aa).

10 helical membrane-spanning segments follow: residues 2–22, 66–86, 135–155, 177–197, 260–280, 292–312, 391–411, 437–457, 490–510, and 546–566; these read MNLV…AIPL, SFSV…LHIF, GLTV…FALI, VLYI…SQGV, TILS…ALCF, GIAI…IVGV, VFGG…LAVF, VLVC…ASIL, FAGF…SMIF, and FIGL…FPAL.

Belongs to the KdpA family. As to quaternary structure, the system is composed of three essential subunits: KdpA, KdpB and KdpC.

The protein localises to the cell membrane. Its function is as follows. Part of the high-affinity ATP-driven potassium transport (or Kdp) system, which catalyzes the hydrolysis of ATP coupled with the electrogenic transport of potassium into the cytoplasm. This subunit binds the extracellular potassium ions and delivers the ions to the membrane domain of KdpB through an intramembrane tunnel. The protein is Potassium-transporting ATPase potassium-binding subunit of Clostridium botulinum (strain Eklund 17B / Type B).